A 105-amino-acid polypeptide reads, in one-letter code: uncharacterized protein (105 aa).

Transmembrane regions (helical) follow at residues 26 to 46 (NVLIASWLSFVVFLILGCIAI) and 66 to 86 (SALAWTFFVLAILFGAATLAI).

The protein localises to the cell membrane. This is an uncharacterized protein from Mycoplasma pneumoniae (strain ATCC 29342 / M129 / Subtype 1) (Mycoplasmoides pneumoniae).